The sequence spans 211 residues: Redox-sensing transcriptional repressor Rex (211 aa).

The segment at residues 18-57 (LYYRFLKNLHASGKQRVSSAELSEAVKVDSATIRRDFSYF) is a DNA-binding region (H-T-H motif). 92 to 97 (GVGNLG) is a binding site for NAD(+).

This sequence belongs to the transcriptional regulatory Rex family. Homodimer.

It localises to the cytoplasm. Modulates transcription in response to changes in cellular NADH/NAD(+) redox state. In Anoxybacillus flavithermus (strain DSM 21510 / WK1), this protein is Redox-sensing transcriptional repressor Rex.